Reading from the N-terminus, the 181-residue chain is Alkyl hydroperoxide reductase AhpD (181 aa).

Catalysis depends on Cys131, which acts as the Proton donor. Cys131 and Cys134 are oxidised to a cystine. Cys134 acts as the Cysteine sulfenic acid (-SOH) intermediate in catalysis.

The protein belongs to the AhpD family.

The enzyme catalyses N(6)-[(R)-dihydrolipoyl]-L-lysyl-[lipoyl-carrier protein] + a hydroperoxide = N(6)-[(R)-lipoyl]-L-lysyl-[lipoyl-carrier protein] + an alcohol + H2O. In terms of biological role, antioxidant protein with alkyl hydroperoxidase activity. Required for the reduction of the AhpC active site cysteine residues and for the regeneration of the AhpC enzyme activity. The polypeptide is Alkyl hydroperoxide reductase AhpD (Bradyrhizobium sp. (strain BTAi1 / ATCC BAA-1182)).